We begin with the raw amino-acid sequence, 96 residues long: Large ribosomal subunit protein uL23 (96 aa).

It belongs to the universal ribosomal protein uL23 family. As to quaternary structure, part of the 50S ribosomal subunit. Contacts protein L29, and trigger factor when it is bound to the ribosome.

One of the early assembly proteins it binds 23S rRNA. One of the proteins that surrounds the polypeptide exit tunnel on the outside of the ribosome. Forms the main docking site for trigger factor binding to the ribosome. In Maridesulfovibrio salexigens (strain ATCC 14822 / DSM 2638 / NCIMB 8403 / VKM B-1763) (Desulfovibrio salexigens), this protein is Large ribosomal subunit protein uL23.